Consider the following 245-residue polypeptide: Probable histone chaperone asf-1-like protein (245 aa).

Over residues 157–166 (EDPVAEPVDE) the composition is skewed to acidic residues. Residues 157–245 (EDPVAEPVDE…SGDVEMGDKH (89 aa)) form a disordered region. Over residues 167–183 (EANKVFDEDDLMPLHDD) the composition is skewed to basic and acidic residues. Residues 184-206 (GQDDDEEEEDDDETGPNTEEVDL) show a composition bias toward acidic residues. Basic and acidic residues predominate over residues 215 to 245 (ANAHDGTEQKNGEESMEHDGASGDVEMGDKH).

The protein belongs to the ASF1 family. Interacts with histone H3 and histone H4.

The protein resides in the nucleus. Functionally, histone chaperone that facilitates histone deposition and histone exchange and removal during nucleosome assembly and disassembly. In Caenorhabditis elegans, this protein is Probable histone chaperone asf-1-like protein (asfl-1).